Here is a 165-residue protein sequence, read N- to C-terminus: Large ribosomal subunit protein uL10 (165 aa).

This sequence belongs to the universal ribosomal protein uL10 family. In terms of assembly, part of the ribosomal stalk of the 50S ribosomal subunit. The N-terminus interacts with L11 and the large rRNA to form the base of the stalk. The C-terminus forms an elongated spine to which L12 dimers bind in a sequential fashion forming a multimeric L10(L12)X complex.

Functionally, forms part of the ribosomal stalk, playing a central role in the interaction of the ribosome with GTP-bound translation factors. The chain is Large ribosomal subunit protein uL10 from Mycoplasma capricolum subsp. capricolum (strain California kid / ATCC 27343 / NCTC 10154).